Reading from the N-terminus, the 668-residue chain is DNA ligase (668 aa).

Residues 37–41 (DAIYD), 86–87 (SL), and E116 each bind NAD(+). K118 (N6-AMP-lysine intermediate) is an active-site residue. NAD(+)-binding residues include R139, E176, K289, and K313. Zn(2+)-binding residues include C407, C410, C425, and C430. The BRCT domain maps to 586-668 (AQSSALAGLT…RALIETREMP (83 aa)).

It belongs to the NAD-dependent DNA ligase family. LigA subfamily. Mg(2+) is required as a cofactor. The cofactor is Mn(2+).

The enzyme catalyses NAD(+) + (deoxyribonucleotide)n-3'-hydroxyl + 5'-phospho-(deoxyribonucleotide)m = (deoxyribonucleotide)n+m + AMP + beta-nicotinamide D-nucleotide.. DNA ligase that catalyzes the formation of phosphodiester linkages between 5'-phosphoryl and 3'-hydroxyl groups in double-stranded DNA using NAD as a coenzyme and as the energy source for the reaction. It is essential for DNA replication and repair of damaged DNA. The chain is DNA ligase from Gloeobacter violaceus (strain ATCC 29082 / PCC 7421).